Here is a 368-residue protein sequence, read N- to C-terminus: GDSL esterase/lipase At4g16230 (368 aa).

An N-terminal signal peptide occupies residues 1–24 (MSLLVFLCQIIVLSVLFFSEVCLA). Serine 37 (nucleophile) is an active-site residue. 2 N-linked (GlcNAc...) asparagine glycosylation sites follow: asparagine 117 and asparagine 286. Active-site residues include aspartate 329 and histidine 332.

It belongs to the 'GDSL' lipolytic enzyme family.

It is found in the secreted. This chain is GDSL esterase/lipase At4g16230, found in Arabidopsis thaliana (Mouse-ear cress).